The chain runs to 93 residues: Mammaglobin-A (93 aa).

The first 18 residues, 1-18 (MKLLMVLMLAALSQHCYA), serve as a signal peptide directing secretion. Residues N53 and N68 are each glycosylated (N-linked (GlcNAc...) asparagine).

This sequence belongs to the secretoglobin family. Lipophilin subfamily. In terms of tissue distribution, mammary gland specific. Over-expressed in breast cancer.

It localises to the secreted. In Homo sapiens (Human), this protein is Mammaglobin-A (SCGB2A2).